The chain runs to 281 residues: MTQSEPPSLPLYSPARVRDLLTRHGLRPTKSLGQNFLIDGNILRAIAQAGGAAPGVPVLEVGPGLGVLTRELAARGAHVTALEKDERLRPVLAETLAGQDVQVVWGDALEFDYASLPAGTRVIANLPYYITGPLLARFMQAPGIISATVLVQKEVAGRLAARPGEDNYGFLSALAALYGTVQHVRDVPKGAFLPAPDVTSSVVRLDFDRARPAPEPAFLKFVEAALHHRRKTLRNNLRLAGFGGEAVGEALMAAGLRPDVRAEDVPLEDLRVLARRLGVLR.

Asparagine 35, leucine 37, glycine 62, glutamate 83, aspartate 107, and asparagine 125 together coordinate S-adenosyl-L-methionine.

It belongs to the class I-like SAM-binding methyltransferase superfamily. rRNA adenine N(6)-methyltransferase family. RsmA subfamily.

It localises to the cytoplasm. It catalyses the reaction adenosine(1518)/adenosine(1519) in 16S rRNA + 4 S-adenosyl-L-methionine = N(6)-dimethyladenosine(1518)/N(6)-dimethyladenosine(1519) in 16S rRNA + 4 S-adenosyl-L-homocysteine + 4 H(+). Functionally, specifically dimethylates two adjacent adenosines (A1518 and A1519) in the loop of a conserved hairpin near the 3'-end of 16S rRNA in the 30S particle. May play a critical role in biogenesis of 30S subunits. The sequence is that of Ribosomal RNA small subunit methyltransferase A from Deinococcus geothermalis (strain DSM 11300 / CIP 105573 / AG-3a).